Here is a 728-residue protein sequence, read N- to C-terminus: Magnetosome formation protease MamE (728 aa).

Topologically, residues 1-21 are cytoplasmic; it reads MAMFNGDVEDGGRGDASCGKD. Residues 22 to 42 form a helical membrane-spanning segment; the sequence is LKRYLMLMGVVALVVLFGAFI. The Lumenal portion of the chain corresponds to 43–728; it reads YRQSSGGLRL…RNGQEFWIVL (686 aa). Active-site charge relay system residues include His188, Asp221, and Ser297. The MCR (magnetochrome) 1 signature appears at 375 to 398; the sequence is IFAGTRAPHTDGRQNMDCTTCHDL. Residues Cys392, Cys395, His396, Cys438, Cys441, and His442 each coordinate heme. Residues 421–444 carry the MCR 2 motif; the sequence is IPMGAVSPHTDGRQNMNCANCHQM. PDZ domains follow at residues 471–573 and 622–721; these read AINI…LRDG and PAVM…NRNG.

This sequence in the N-terminal section; belongs to the peptidase S1C family. As to quaternary structure, might interact with MamB via PDZ1. It depends on heme as a cofactor. In terms of processing, subject to autocatalytic cleavage; cleavage also requires MamO.

It localises to the magnetosome membrane. Autoproteolysis is stimulated by exogenous substrates or peptides that bind to its PDZ domains; may be stimulated by an environmental cue in vivo. Protease activity is tightly regulated; increasing its activity decreases substrate levels and disturbs biomineralization. Acts at 2 distinct steps of magnetosome formation; required for correct localization of proteins to the magnetosome while the protease activity is required for maturation of small magnetite crystals into larger, functional ones. The 2 functions are separable by mutation. Probably cleaves at least itself, MamO and MamP; cleavage requires the putative transport domain of MamO. Involved in localization of some proteins (at least MamA, MamC, MamF, MamI and MamJ) to the magnetosome. The protein is Magnetosome formation protease MamE (mamE) of Paramagnetospirillum magneticum (strain ATCC 700264 / AMB-1) (Magnetospirillum magneticum).